The primary structure comprises 425 residues: Dihydroorotase (425 aa).

H56 and H58 together coordinate Zn(2+). Substrate-binding positions include 58-60 (HYR) and N90. Positions 148, 175, and 228 each coordinate Zn(2+). Substrate is bound at residue N274. D301 lines the Zn(2+) pocket. D301 is a catalytic residue. Substrate is bound by residues H305 and 319–320 (FG).

It belongs to the metallo-dependent hydrolases superfamily. DHOase family. Class I DHOase subfamily. The cofactor is Zn(2+).

It catalyses the reaction (S)-dihydroorotate + H2O = N-carbamoyl-L-aspartate + H(+). The protein operates within pyrimidine metabolism; UMP biosynthesis via de novo pathway; (S)-dihydroorotate from bicarbonate: step 3/3. In terms of biological role, catalyzes the reversible cyclization of carbamoyl aspartate to dihydroorotate. The sequence is that of Dihydroorotase from Lactobacillus johnsonii (strain CNCM I-12250 / La1 / NCC 533).